Consider the following 618-residue polypeptide: 1-deoxy-D-xylulose-5-phosphate synthase (618 aa).

Residues His70 and 111–113 (GHS) each bind thiamine diphosphate. Asp142 is a Mg(2+) binding site. Residues 143-144 (GS), Asn171, Tyr278, and Glu360 contribute to the thiamine diphosphate site. Asn171 contacts Mg(2+).

The protein belongs to the transketolase family. DXPS subfamily. In terms of assembly, homodimer. Requires Mg(2+) as cofactor. The cofactor is thiamine diphosphate.

The enzyme catalyses D-glyceraldehyde 3-phosphate + pyruvate + H(+) = 1-deoxy-D-xylulose 5-phosphate + CO2. It participates in metabolic intermediate biosynthesis; 1-deoxy-D-xylulose 5-phosphate biosynthesis; 1-deoxy-D-xylulose 5-phosphate from D-glyceraldehyde 3-phosphate and pyruvate: step 1/1. Functionally, catalyzes the acyloin condensation reaction between C atoms 2 and 3 of pyruvate and glyceraldehyde 3-phosphate to yield 1-deoxy-D-xylulose-5-phosphate (DXP). This chain is 1-deoxy-D-xylulose-5-phosphate synthase, found in Helicobacter pylori (strain HPAG1).